The chain runs to 555 residues: Meiotic mRNA stability protein kinase SSN3 (555 aa).

The Protein kinase domain maps to 75-463; the sequence is YEVIGYIAAG…AFNALEHKYF (389 aa). 81–89 is an ATP binding site; it reads IAAGTYGKV. A compositionally biased stretch (polar residues) spans 100–138; the sequence is TNSANGSSLNGTNAKIPQFDSTQPKSSSSMDMQANTNAL. The segment at 100–166 is disordered; sequence TNSANGSSLN…REDVSPHYNS (67 aa). Lysine 183 provides a ligand contact to ATP. Residue aspartate 286 is the Proton acceptor of the active site.

The protein belongs to the protein kinase superfamily. CMGC Ser/Thr protein kinase family. CDC2/CDKX subfamily. As to quaternary structure, component of the SRB8-11 complex which consists of SRB8, SSN2/SRB9, SSN3/SRB10 and SSN8/SRB11. The SRB8-11 complex associates with the Mediator complex. The SSN3/SRB10 and SSN8/SRB11 kinase-cyclin pair also associate with the RNA polymerase II holoenzyme. Interacts with TUP1.

The protein resides in the nucleus. The enzyme catalyses L-seryl-[protein] + ATP = O-phospho-L-seryl-[protein] + ADP + H(+). It catalyses the reaction L-threonyl-[protein] + ATP = O-phospho-L-threonyl-[protein] + ADP + H(+). The catalysed reaction is [DNA-directed RNA polymerase] + ATP = phospho-[DNA-directed RNA polymerase] + ADP + H(+). Functionally, component of the SRB8-11 complex. The SRB8-11 complex is a regulatory module of the Mediator complex which is itself involved in regulation of basal and activated RNA polymerase II-dependent transcription. The SRB8-11 complex may be involved in the transcriptional repression of a subset of genes regulated by Mediator. It may inhibit the association of the Mediator complex with RNA polymerase II to form the holoenzyme complex. The SRB8-11 complex phosphorylates the C-terminal domain (CTD) of the largest subunit of RNA polymerase II RPB1 at serines 2 and 5. The SSN3/SRB10 and SSN8/SRB11 kinase-cyclin pair may also positively and negatively regulate numerous transcriptional activators in response to changes in nutritional and physiological conditions. Phosphorylates GCN4, promoting its ubiquitin-mediated degradation, and MSN2, promoting its nuclear exclusion. Phosphorylates STE12, thereby promoting its degradation and inhibition of filamentous growth. Phosphorylates GAL4, and this phosphorylation is required for efficient galactose-inducible transcription. Also phosphorylates BDF1 and the TAF2 subunit of the TFIID complex. This Saccharomyces cerevisiae (strain ATCC 204508 / S288c) (Baker's yeast) protein is Meiotic mRNA stability protein kinase SSN3 (SSN3).